Here is a 404-residue protein sequence, read N- to C-terminus: Phosphopentomutase (404 aa).

Mn(2+) contacts are provided by D10, D297, H302, D338, H339, and H350.

It belongs to the phosphopentomutase family. Mn(2+) serves as cofactor.

The protein localises to the cytoplasm. The enzyme catalyses 2-deoxy-alpha-D-ribose 1-phosphate = 2-deoxy-D-ribose 5-phosphate. It catalyses the reaction alpha-D-ribose 1-phosphate = D-ribose 5-phosphate. The protein operates within carbohydrate degradation; 2-deoxy-D-ribose 1-phosphate degradation; D-glyceraldehyde 3-phosphate and acetaldehyde from 2-deoxy-alpha-D-ribose 1-phosphate: step 1/2. Functionally, isomerase that catalyzes the conversion of deoxy-ribose 1-phosphate (dRib-1-P) and ribose 1-phosphate (Rib-1-P) to deoxy-ribose 5-phosphate (dRib-5-P) and ribose 5-phosphate (Rib-5-P), respectively. The chain is Phosphopentomutase from Colwellia psychrerythraea (strain 34H / ATCC BAA-681) (Vibrio psychroerythus).